Here is a 1439-residue protein sequence, read N- to C-terminus: Mediator of RNA polymerase II transcription subunit 23 (1439 aa).

Residues S282–A318 adopt a coiled-coil conformation. An interaction with Hsf region spans residues H358–Q625. Disordered regions lie at residues N1338–Q1372 and S1401–N1439. Composition is skewed to low complexity over residues S1348–Q1372 and Q1411–N1439.

The protein belongs to the Mediator complex subunit 23 family. Component of the Mediator complex. Interacts with Hsf.

The protein localises to the nucleus. Its function is as follows. Component of the Mediator complex, a coactivator involved in the regulated transcription of nearly all RNA polymerase II-dependent genes. Mediator functions as a bridge to convey information from gene-specific regulatory proteins to the basal RNA polymerase II transcription machinery. Mediator is recruited to promoters by direct interactions with regulatory proteins and serves as a scaffold for the assembly of a functional preinitiation complex with RNA polymerase II and the general transcription factors. Required for transcriptional activation in response to heat shock. This Drosophila melanogaster (Fruit fly) protein is Mediator of RNA polymerase II transcription subunit 23 (MED23).